Reading from the N-terminus, the 928-residue chain is Isoleucine--tRNA ligase (928 aa).

The 'HIGH' region signature appears at 57 to 67 (PFANGNIHMGH). Glu552 contacts L-isoleucyl-5'-AMP. The 'KMSKS' region signature appears at 593–597 (KMSKS). Lys596 contacts ATP. Positions 887, 890, 907, and 910 each coordinate Zn(2+).

It belongs to the class-I aminoacyl-tRNA synthetase family. IleS type 1 subfamily. In terms of assembly, monomer. It depends on Zn(2+) as a cofactor.

Its subcellular location is the cytoplasm. It catalyses the reaction tRNA(Ile) + L-isoleucine + ATP = L-isoleucyl-tRNA(Ile) + AMP + diphosphate. In terms of biological role, catalyzes the attachment of isoleucine to tRNA(Ile). As IleRS can inadvertently accommodate and process structurally similar amino acids such as valine, to avoid such errors it has two additional distinct tRNA(Ile)-dependent editing activities. One activity is designated as 'pretransfer' editing and involves the hydrolysis of activated Val-AMP. The other activity is designated 'posttransfer' editing and involves deacylation of mischarged Val-tRNA(Ile). In Lacticaseibacillus paracasei (strain ATCC 334 / BCRC 17002 / CCUG 31169 / CIP 107868 / KCTC 3260 / NRRL B-441) (Lactobacillus paracasei), this protein is Isoleucine--tRNA ligase.